The primary structure comprises 133 residues: MKKNITKTIIASTVIAAGLLTQTNDAKAFFSYEWKGLEIAKNLADQAKKDDERIDKLMKESDKNLTPYKAETVNDLYLIVKKLSQGDVKKAVVRIKDGGPRDYYTFDLTRPLEENRKNIKVVKNGEIDSIYWD.

The signal sequence occupies residues 1–28 (MKKNITKTIIASTVIAAGLLTQTNDAKA).

It belongs to the CHIPS/FLIPr family.

It is found in the secreted. Functionally, may be involved in countering the first line of host defense mechanisms. Impairs the leukocyte response to FPRL1 agonists by binding directly to host FPRL1. This chain is FPRL1 inhibitory protein (flr), found in Staphylococcus aureus (strain Mu50 / ATCC 700699).